Consider the following 281-residue polypeptide: DegV domain-containing protein CPE2509 (281 aa).

In terms of domain architecture, DegV spans 4–279 (IAIITDSSCD…PGMVGVSIQK (276 aa)). Hexadecanoate contacts are provided by T60 and S93.

Its function is as follows. May bind long-chain fatty acids, such as palmitate, and may play a role in lipid transport or fatty acid metabolism. This is DegV domain-containing protein CPE2509 from Clostridium perfringens (strain 13 / Type A).